The primary structure comprises 274 residues: Protein RecA (274 aa).

Position 43–50 (43–50) interacts with ATP; sequence GPESSGKT.

Belongs to the RecA family.

It localises to the cytoplasm. Its function is as follows. Can catalyze the hydrolysis of ATP in the presence of single-stranded DNA, the ATP-dependent uptake of single-stranded DNA by duplex DNA, and the ATP-dependent hybridization of homologous single-stranded DNAs. It interacts with LexA causing its activation and leading to its autocatalytic cleavage. In Neisseria flavescens, this protein is Protein RecA.